The chain runs to 347 residues: uncharacterized protein (347 aa).

Mn(2+) contacts are provided by aspartate 207, aspartate 218, histidine 279, glutamate 312, and glutamate 326.

It belongs to the peptidase M24B family. The cofactor is Mn(2+).

This is an uncharacterized protein from Methanocaldococcus jannaschii (strain ATCC 43067 / DSM 2661 / JAL-1 / JCM 10045 / NBRC 100440) (Methanococcus jannaschii).